The primary structure comprises 205 residues: ATP-dependent Clp protease proteolytic subunit (205 aa).

Serine 101 serves as the catalytic Nucleophile. The active site involves histidine 126.

The protein belongs to the peptidase S14 family. As to quaternary structure, component of the chloroplastic Clp protease core complex.

It localises to the plastid. Its subcellular location is the chloroplast stroma. It catalyses the reaction Hydrolysis of proteins to small peptides in the presence of ATP and magnesium. alpha-casein is the usual test substrate. In the absence of ATP, only oligopeptides shorter than five residues are hydrolyzed (such as succinyl-Leu-Tyr-|-NHMec, and Leu-Tyr-Leu-|-Tyr-Trp, in which cleavage of the -Tyr-|-Leu- and -Tyr-|-Trp bonds also occurs).. Cleaves peptides in various proteins in a process that requires ATP hydrolysis. Has a chymotrypsin-like activity. Plays a major role in the degradation of misfolded proteins. In Pinus contorta (Shore pine), this protein is ATP-dependent Clp protease proteolytic subunit.